The primary structure comprises 142 residues: MAKKVQAYVKLQVAAGMANPSPPVGPALGQQGVNIMEFCKAFNAKTDSVEKGLPIPVVITVYSDRSFTFVTKTPPAAVLLKKAAGIKSGSGKPNKDKVGKVTSAQVREIAETKAADMTGSNVEAMTRSIEGTARSMGLVVED.

This sequence belongs to the universal ribosomal protein uL11 family. Part of the ribosomal stalk of the 50S ribosomal subunit. Interacts with L10 and the large rRNA to form the base of the stalk. L10 forms an elongated spine to which L12 dimers bind in a sequential fashion forming a multimeric L10(L12)X complex. Post-translationally, one or more lysine residues are methylated.

In terms of biological role, forms part of the ribosomal stalk which helps the ribosome interact with GTP-bound translation factors. The chain is Large ribosomal subunit protein uL11 from Serratia proteamaculans (strain 568).